We begin with the raw amino-acid sequence, 118 residues long: Large ribosomal subunit protein bL19 (118 aa).

The protein belongs to the bacterial ribosomal protein bL19 family.

Functionally, this protein is located at the 30S-50S ribosomal subunit interface and may play a role in the structure and function of the aminoacyl-tRNA binding site. The protein is Large ribosomal subunit protein bL19 of Beutenbergia cavernae (strain ATCC BAA-8 / DSM 12333 / CCUG 43141 / JCM 11478 / NBRC 16432 / NCIMB 13614 / HKI 0122).